Here is a 37-residue protein sequence, read N- to C-terminus: MKVRASVKKICEKCNVIRRRGRVMVICVNPKHKQRQG.

Belongs to the bacterial ribosomal protein bL36 family.

This chain is Large ribosomal subunit protein bL36, found in Nostoc sp. (strain PCC 7120 / SAG 25.82 / UTEX 2576).